Reading from the N-terminus, the 43-residue chain is Protein PsbN (43 aa).

Residues 4–24 (ATFVAIFISCLLISFTGYALY) traverse the membrane as a helical segment.

This sequence belongs to the PsbN family.

It is found in the plastid. The protein localises to the chloroplast thylakoid membrane. Functionally, may play a role in photosystem I and II biogenesis. This Marchantia polymorpha (Common liverwort) protein is Protein PsbN.